The primary structure comprises 68 residues: 1-carboxybiuret hydrolase subunit AtzG (68 aa).

In terms of assembly, heterotetramer consisting of 2 AtzE and 2 AtzG subunits.

It participates in xenobiotic degradation; atrazine degradation. Functionally, important for the activity of the AtzE subunit of 1-carboxybiuret hydrolase. In Pseudomonas sp. (strain ADP), this protein is 1-carboxybiuret hydrolase subunit AtzG.